We begin with the raw amino-acid sequence, 208 residues long: Small ribosomal subunit protein uS4 (208 aa).

Residues 98–163 enclose the S4 RNA-binding domain; the sequence is QRLDNVVYRM…NPQITRAIEL (66 aa).

The protein belongs to the universal ribosomal protein uS4 family. In terms of assembly, part of the 30S ribosomal subunit. Contacts protein S5. The interaction surface between S4 and S5 is involved in control of translational fidelity.

Functionally, one of the primary rRNA binding proteins, it binds directly to 16S rRNA where it nucleates assembly of the body of the 30S subunit. Its function is as follows. With S5 and S12 plays an important role in translational accuracy. In Campylobacter jejuni (strain RM1221), this protein is Small ribosomal subunit protein uS4.